The chain runs to 640 residues: Endoglucanase 1 (640 aa).

The first 24 residues, 1–24, serve as a signal peptide directing secretion; that stretch reads MARRGGAAASSSMANLLGVALVLA. The active-site Nucleophile is aspartate 94. Catalysis depends on residues histidine 433, aspartate 485, and glutamate 494. Asparagine 528 and asparagine 548 each carry an N-linked (GlcNAc...) asparagine glycan.

Belongs to the glycosyl hydrolase 9 (cellulase E) family. In terms of tissue distribution, expressed in roots, leaf sheaths and flowers.

It is found in the secreted. The enzyme catalyses Endohydrolysis of (1-&gt;4)-beta-D-glucosidic linkages in cellulose, lichenin and cereal beta-D-glucans.. This is Endoglucanase 1 (GLU7) from Oryza sativa subsp. japonica (Rice).